A 186-amino-acid chain; its full sequence is Der GTPase-activating protein YihI (186 aa).

Residues leucine 39 to aspartate 77 are disordered. Residues serine 62 to aspartate 77 show a composition bias toward basic and acidic residues.

It belongs to the YihI family. In terms of assembly, interacts with Der.

A GTPase-activating protein (GAP) that modifies Der/EngA GTPase function. May play a role in ribosome biogenesis. This chain is Der GTPase-activating protein YihI, found in Haemophilus influenzae (strain 86-028NP).